Consider the following 331-residue polypeptide: Major ferric iron-binding protein (331 aa).

Residues Met-1 to Ala-22 form the signal peptide. The Fe cation site is built by His-31, Glu-79, Tyr-217, and Tyr-218.

It belongs to the bacterial solute-binding protein 1 family.

Its subcellular location is the periplasm. In terms of biological role, this protein may be a central component in the iron-acquisition system. In Neisseria meningitidis serogroup B (strain ATCC BAA-335 / MC58), this protein is Major ferric iron-binding protein (fbpA).